The chain runs to 277 residues: 3-methyl-2-oxobutanoate hydroxymethyltransferase (277 aa).

Residues D43 and D82 each coordinate Mg(2+). Residues 43–44 (DS), D82, and K112 each bind 3-methyl-2-oxobutanoate. Residue E114 coordinates Mg(2+). The active-site Proton acceptor is the E181.

This sequence belongs to the PanB family. As to quaternary structure, homodecamer; pentamer of dimers. Requires Mg(2+) as cofactor.

The protein resides in the cytoplasm. It carries out the reaction 3-methyl-2-oxobutanoate + (6R)-5,10-methylene-5,6,7,8-tetrahydrofolate + H2O = 2-dehydropantoate + (6S)-5,6,7,8-tetrahydrofolate. Its pathway is cofactor biosynthesis; (R)-pantothenate biosynthesis; (R)-pantoate from 3-methyl-2-oxobutanoate: step 1/2. Functionally, catalyzes the reversible reaction in which hydroxymethyl group from 5,10-methylenetetrahydrofolate is transferred onto alpha-ketoisovalerate to form ketopantoate. This chain is 3-methyl-2-oxobutanoate hydroxymethyltransferase, found in Bacillus subtilis (strain 168).